Here is a 212-residue protein sequence, read N- to C-terminus: Pyridoxine/pyridoxamine 5'-phosphate oxidase (212 aa).

Substrate is bound by residues 8 to 11 and lysine 66; that span reads RREY. FMN is bound by residues 61 to 66, 76 to 77, arginine 82, lysine 83, and glutamine 105; these read RIVLLK and FT. Tyrosine 123, arginine 127, and serine 131 together coordinate substrate. FMN is bound by residues 140 to 141 and tryptophan 185; that span reads QS. 191–193 is a binding site for substrate; that stretch reads RLH. Arginine 195 is an FMN binding site.

This sequence belongs to the pyridoxamine 5'-phosphate oxidase family. In terms of assembly, homodimer. The cofactor is FMN.

It catalyses the reaction pyridoxamine 5'-phosphate + O2 + H2O = pyridoxal 5'-phosphate + H2O2 + NH4(+). The enzyme catalyses pyridoxine 5'-phosphate + O2 = pyridoxal 5'-phosphate + H2O2. It participates in cofactor metabolism; pyridoxal 5'-phosphate salvage; pyridoxal 5'-phosphate from pyridoxamine 5'-phosphate: step 1/1. Its pathway is cofactor metabolism; pyridoxal 5'-phosphate salvage; pyridoxal 5'-phosphate from pyridoxine 5'-phosphate: step 1/1. In terms of biological role, catalyzes the oxidation of either pyridoxine 5'-phosphate (PNP) or pyridoxamine 5'-phosphate (PMP) into pyridoxal 5'-phosphate (PLP). The chain is Pyridoxine/pyridoxamine 5'-phosphate oxidase from Shewanella baltica (strain OS155 / ATCC BAA-1091).